Here is a 353-residue protein sequence, read N- to C-terminus: Nicotinate-nucleotide--dimethylbenzimidazole phosphoribosyltransferase (353 aa).

The active-site Proton acceptor is Glu318.

The protein belongs to the CobT family.

The catalysed reaction is 5,6-dimethylbenzimidazole + nicotinate beta-D-ribonucleotide = alpha-ribazole 5'-phosphate + nicotinate + H(+). The protein operates within nucleoside biosynthesis; alpha-ribazole biosynthesis; alpha-ribazole from 5,6-dimethylbenzimidazole: step 1/2. Catalyzes the synthesis of alpha-ribazole-5'-phosphate from nicotinate mononucleotide (NAMN) and 5,6-dimethylbenzimidazole (DMB). The chain is Nicotinate-nucleotide--dimethylbenzimidazole phosphoribosyltransferase from Chloroflexus aggregans (strain MD-66 / DSM 9485).